Here is a 361-residue protein sequence, read N- to C-terminus: Basic helix-loop-helix protein 79 (361 aa).

Positions 66–159 (APEASNGSGS…ASTVTAGQKT (94 aa)) are disordered. Residues 124 to 138 (GRPERARPGAKKKAE) are compositionally biased toward basic and acidic residues. Over residues 146–157 (PATSASTVTAGQ) the composition is skewed to polar residues. The short motif at 166–173 (ARRGQATD) is the Nuclear localization signal element. The interval 170-183 (QATDSHSLAERVRR) is basic motif; degenerate. Residues 170-220 (QATDSHSLAERVRRERISERMRYLQELVPGCNKVTGKAGMLDEIINYVQSL) form the bHLH domain. Positions 184-220 (ERISERMRYLQELVPGCNKVTGKAGMLDEIINYVQSL) are helix-loop-helix motif.

It belongs to the bHLH protein family. Homodimer. Interacts with IBH1.

Its subcellular location is the nucleus. In terms of biological role, together with BCL1, positive regulator of cell elongation at least partially through increased gibberellic acid (GA) biosynthesis. The polypeptide is Basic helix-loop-helix protein 79 (Oryza sativa subsp. indica (Rice)).